A 215-amino-acid polypeptide reads, in one-letter code: Cytochrome b6 (215 aa).

Residues 32 to 52 (IFYCLGGITLVCFLIQFATGF) traverse the membrane as a helical segment. Residue Cys35 coordinates heme c. The heme b site is built by His86 and His100. Helical transmembrane passes span 90–110 (ASMM…TGGF), 116–136 (LTWV…VTGY), and 186–206 (AHTF…FLMI). 2 residues coordinate heme b: His187 and His202.

The protein belongs to the cytochrome b family. PetB subfamily. As to quaternary structure, the 4 large subunits of the cytochrome b6-f complex are cytochrome b6, subunit IV (17 kDa polypeptide, PetD), cytochrome f and the Rieske protein, while the 4 small subunits are PetG, PetL, PetM and PetN. The complex functions as a dimer. Heme b serves as cofactor. Heme c is required as a cofactor.

The protein localises to the cellular thylakoid membrane. Functionally, component of the cytochrome b6-f complex, which mediates electron transfer between photosystem II (PSII) and photosystem I (PSI), cyclic electron flow around PSI, and state transitions. The chain is Cytochrome b6 from Trichormus variabilis (strain ATCC 29413 / PCC 7937) (Anabaena variabilis).